The chain runs to 198 residues: Outer-membrane lipoprotein carrier protein (198 aa).

Positions 1 to 17 (MKKFLFSLCLLSSTVLA) are cleaved as a signal peptide.

The protein belongs to the LolA family. As to quaternary structure, monomer.

It is found in the periplasm. In terms of biological role, participates in the translocation of lipoproteins from the inner membrane to the outer membrane. Only forms a complex with a lipoprotein if the residue after the N-terminal Cys is not an aspartate (The Asp acts as a targeting signal to indicate that the lipoprotein should stay in the inner membrane). The sequence is that of Outer-membrane lipoprotein carrier protein from Aliivibrio fischeri (strain MJ11) (Vibrio fischeri).